The primary structure comprises 58 residues: UPF0391 membrane protein MADE_1011595 (58 aa).

2 consecutive transmembrane segments (helical) span residues 4 to 24 (WAITFFIIAIIAAVFGFGGIA) and 27 to 47 (ATGIAQFLFFVFIALLVISLI).

It belongs to the UPF0391 family.

The protein localises to the cell membrane. This chain is UPF0391 membrane protein MADE_1011595, found in Alteromonas mediterranea (strain DSM 17117 / CIP 110805 / LMG 28347 / Deep ecotype).